The following is a 427-amino-acid chain: MATVIHNPLKALGDQFYKEAIEHCRSYNSRLCAERSVRLPFLDSQTGVAQNNCYIWMEKRHRGPGLAPGQLYTYPARCWRKKRRLHPPEDSRLKLLEIKPETSHLPGKTELITETEFITKMSVDLRRFLSCKLYTSEVDLPLKKDGFTSESTTLEALLRGEGIEKKMDTKEEDPIQEIQRVLENDENADEVNEEEDLEEDIPKRKNRPRGRPKTPTWKKIFQKNARGSGGGRRRNDAASQDDHDKPYVCDICGKRYKNRPGLSYHYAHTHLASEEGDEAREQETRSSPVHRNENHKPQKGPDGVIIPNNYCDFCLGGSNMNKKSGRPEELVSCSDCGRSGHPTCLQFTTNMTEAVKTYQWQCIECKSCSLCGTSENDDQLLFCDDCDRGYHMYCLNPPVFEPPEGSWSCHLCRELLRERASAFGFQA.

Residues 182–244 are disordered; the sequence is LENDENADEV…NDAASQDDHD (63 aa). Residues 184 to 199 are compositionally biased toward acidic residues; sequence NDENADEVNEEEDLEE. The span at 233-244 shows a compositional bias: basic and acidic residues; sequence RRNDAASQDDHD. Residues 247-270 form a C2H2-type zinc finger; that stretch reads YVCDICGKRYKNRPGLSYHYAHTH. The segment at 272–301 is disordered; sequence ASEEGDEAREQETRSSPVHRNENHKPQKGP. Positions 279–296 are enriched in basic and acidic residues; that stretch reads AREQETRSSPVHRNENHK. PHD-type zinc fingers lie at residues 308–368 and 365–415; these read NNYC…CKSC and CKSC…CREL.

This sequence belongs to the requiem/DPF family. As to quaternary structure, component of the BAF complex. Interacts with acetylated histones H3 and H4. Component of neuron-specific chromatin remodeling complex (nBAF complex), a subfamily of ATP-dependent SWI/SNF chromatin remodeling complexes. As to expression, expressed in the heart and somites.

It localises to the nucleus. Its function is as follows. Muscle-specific component of the BAF complex, a multiprotein complex involved in transcriptional activation and repression of select genes by chromatin remodeling (alteration of DNA-nucleosome topology). Specifically binds acetylated lysines on histone 3 and 4. In the complex, it acts as a tissue-specific anchor between histone acetylations and methylations and chromatin remodeling. It thereby probably plays an essential role in heart and skeletal muscle development. Belongs to the neuron-specific chromatin remodeling complex (nBAF complex) and plays a role in neural development. This is Zinc finger protein DPF3 (DPF3) from Gallus gallus (Chicken).